Reading from the N-terminus, the 72-residue chain is Conotoxin VnMKLT2-011 (72 aa).

Residues 1-23 (MMKLTCVLIIAVLFLTACQLTTA) form the signal peptide. The propeptide occupies 24–42 (ETRDEYRAVRSSDEVRNSR). 3 disulfides stabilise this stretch: C44–C57, C51–C62, and C56–C71.

This sequence belongs to the conotoxin O1 superfamily. In terms of tissue distribution, expressed by the venom duct.

Its subcellular location is the secreted. In Conus ventricosus (Mediterranean cone), this protein is Conotoxin VnMKLT2-011.